The sequence spans 143 residues: Large-conductance mechanosensitive channel (143 aa).

The next 2 helical transmembrane spans lie at 10–30 (FAVK…GAFS) and 89–109 (GSFI…FLMV).

The protein belongs to the MscL family. Homopentamer.

Its subcellular location is the cell inner membrane. Functionally, channel that opens in response to stretch forces in the membrane lipid bilayer. May participate in the regulation of osmotic pressure changes within the cell. In Burkholderia cenocepacia (strain ATCC BAA-245 / DSM 16553 / LMG 16656 / NCTC 13227 / J2315 / CF5610) (Burkholderia cepacia (strain J2315)), this protein is Large-conductance mechanosensitive channel.